A 190-amino-acid polypeptide reads, in one-letter code: Holliday junction branch migration complex subunit RuvA (190 aa).

A domain I region spans residues Met1–Gly64. The domain II stretch occupies residues Thr65 to Gly137. The flexible linker stretch occupies residues Gly137–His141. The interval Ala142 to Arg190 is domain III.

It belongs to the RuvA family. In terms of assembly, homotetramer. Forms an RuvA(8)-RuvB(12)-Holliday junction (HJ) complex. HJ DNA is sandwiched between 2 RuvA tetramers; dsDNA enters through RuvA and exits via RuvB. An RuvB hexamer assembles on each DNA strand where it exits the tetramer. Each RuvB hexamer is contacted by two RuvA subunits (via domain III) on 2 adjacent RuvB subunits; this complex drives branch migration. In the full resolvosome a probable DNA-RuvA(4)-RuvB(12)-RuvC(2) complex forms which resolves the HJ.

Its subcellular location is the cytoplasm. Its function is as follows. The RuvA-RuvB-RuvC complex processes Holliday junction (HJ) DNA during genetic recombination and DNA repair, while the RuvA-RuvB complex plays an important role in the rescue of blocked DNA replication forks via replication fork reversal (RFR). RuvA specifically binds to HJ cruciform DNA, conferring on it an open structure. The RuvB hexamer acts as an ATP-dependent pump, pulling dsDNA into and through the RuvAB complex. HJ branch migration allows RuvC to scan DNA until it finds its consensus sequence, where it cleaves and resolves the cruciform DNA. The sequence is that of Holliday junction branch migration complex subunit RuvA from Bordetella avium (strain 197N).